We begin with the raw amino-acid sequence, 487 residues long: Glutamyl-tRNA(Gln) amidotransferase subunit A (487 aa).

Active-site charge relay system residues include Lys-79 and Ser-158. Ser-182 (acyl-ester intermediate) is an active-site residue.

The protein belongs to the amidase family. GatA subfamily. Heterotrimer of A, B and C subunits.

The catalysed reaction is L-glutamyl-tRNA(Gln) + L-glutamine + ATP + H2O = L-glutaminyl-tRNA(Gln) + L-glutamate + ADP + phosphate + H(+). Its function is as follows. Allows the formation of correctly charged Gln-tRNA(Gln) through the transamidation of misacylated Glu-tRNA(Gln) in organisms which lack glutaminyl-tRNA synthetase. The reaction takes place in the presence of glutamine and ATP through an activated gamma-phospho-Glu-tRNA(Gln). This is Glutamyl-tRNA(Gln) amidotransferase subunit A from Ehrlichia chaffeensis (strain ATCC CRL-10679 / Arkansas).